A 314-amino-acid chain; its full sequence is tRNA pseudouridine synthase B (314 aa).

A substrate-binding site is contributed by H43. D48 acts as the Nucleophile in catalysis. Residues Y76, Y179, and L200 each contribute to the substrate site.

Belongs to the pseudouridine synthase TruB family. Type 1 subfamily.

It catalyses the reaction uridine(55) in tRNA = pseudouridine(55) in tRNA. Responsible for synthesis of pseudouridine from uracil-55 in the psi GC loop of transfer RNAs. The polypeptide is tRNA pseudouridine synthase B (Escherichia coli O139:H28 (strain E24377A / ETEC)).